The primary structure comprises 706 residues: Kinesin-like protein KIF2A (706 aa).

A globular region spans residues Met-1–Asp-217. The segment at Leu-66–Ile-139 is disordered. Phosphoserine is present on Ser-75. 2 positions are modified to phosphothreonine: Thr-78 and Thr-97. Ser-100 is subject to Phosphoserine. Lys-102 carries the N6-acetyllysine modification. A compositionally biased stretch (polar residues) spans Phe-123–Ile-139. Phosphoserine is present on residues Ser-135 and Ser-140. A disordered region spans residues Lys-165–Gln-186. Positions Arg-223 to Leu-553 constitute a Kinesin motor domain. Residue Gly-313 to Thr-320 participates in ATP binding. Residues Asp-556 and Gln-573 each carry the phosphoserine modification. The stretch at Ala-660–Asn-699 forms a coiled coil.

This sequence belongs to the TRAFAC class myosin-kinesin ATPase superfamily. Kinesin family. MCAK/KIF2 subfamily. In terms of assembly, interacts with AURKA and PLK1. Interacts with PSRC1. Interacts with MCRS1; the interaction enhances recruitment of KIF2A to the minus ends of spindle microtubules which promotes chromosome alignment.

It localises to the cytoplasm. It is found in the cytoskeleton. The protein localises to the microtubule organizing center. The protein resides in the centrosome. Its subcellular location is the spindle pole. It localises to the spindle. Plus end-directed microtubule-dependent motor required for normal brain development. May regulate microtubule dynamics during axonal growth. Required for normal progression through mitosis. Required for normal congress of chromosomes at the metaphase plate. Required for normal spindle dynamics during mitosis. Promotes spindle turnover. Implicated in formation of bipolar mitotic spindles. Has microtubule depolymerization activity. The protein is Kinesin-like protein KIF2A (KIF2A) of Homo sapiens (Human).